We begin with the raw amino-acid sequence, 316 residues long: L-lactate dehydrogenase (316 aa).

Residues Val-15, Asp-37, Lys-42, Tyr-68, and 82–83 contribute to the NAD(+) site; that span reads GL. Substrate-binding positions include Gln-85, Arg-91, and 123 to 126; that span reads NPVD. NAD(+) is bound by residues 121-123 and Thr-146; that span reads ASN. Substrate is bound at residue 151–154; sequence DTSR. Beta-D-fructose 1,6-bisphosphate contacts are provided by Arg-156 and His-171. His-178 (proton acceptor) is an active-site residue. At Tyr-222 the chain carries Phosphotyrosine. Residue Thr-231 participates in substrate binding.

The protein belongs to the LDH/MDH superfamily. LDH family. As to quaternary structure, homotetramer.

The protein localises to the cytoplasm. The enzyme catalyses (S)-lactate + NAD(+) = pyruvate + NADH + H(+). It participates in fermentation; pyruvate fermentation to lactate; (S)-lactate from pyruvate: step 1/1. Allosterically activated by fructose 1,6-bisphosphate (FBP). Functionally, catalyzes the conversion of lactate to pyruvate. This chain is L-lactate dehydrogenase, found in Borrelia garinii subsp. bavariensis (strain ATCC BAA-2496 / DSM 23469 / PBi) (Borreliella bavariensis).